The following is a 218-amino-acid chain: Pyrrolidone-carboxylate peptidase (218 aa).

Active-site residues include glutamate 81, cysteine 144, and histidine 169.

The protein belongs to the peptidase C15 family. Homotetramer.

The protein localises to the cytoplasm. It catalyses the reaction Release of an N-terminal pyroglutamyl group from a polypeptide, the second amino acid generally not being Pro.. In terms of biological role, removes 5-oxoproline from various penultimate amino acid residues except L-proline. The protein is Pyrrolidone-carboxylate peptidase (pcp) of Deinococcus radiodurans (strain ATCC 13939 / DSM 20539 / JCM 16871 / CCUG 27074 / LMG 4051 / NBRC 15346 / NCIMB 9279 / VKM B-1422 / R1).